A 38-amino-acid polypeptide reads, in one-letter code: Photosystem II reaction center protein L (38 aa).

The helical transmembrane segment at Ser17–Phe37 threads the bilayer.

It belongs to the PsbL family. As to quaternary structure, PSII is composed of 1 copy each of membrane proteins PsbA, PsbB, PsbC, PsbD, PsbE, PsbF, PsbH, PsbI, PsbJ, PsbK, PsbL, PsbM, PsbT, PsbX, PsbY, PsbZ, Psb30/Ycf12, at least 3 peripheral proteins of the oxygen-evolving complex and a large number of cofactors. It forms dimeric complexes.

The protein resides in the plastid. It is found in the chloroplast thylakoid membrane. One of the components of the core complex of photosystem II (PSII). PSII is a light-driven water:plastoquinone oxidoreductase that uses light energy to abstract electrons from H(2)O, generating O(2) and a proton gradient subsequently used for ATP formation. It consists of a core antenna complex that captures photons, and an electron transfer chain that converts photonic excitation into a charge separation. This subunit is found at the monomer-monomer interface and is required for correct PSII assembly and/or dimerization. The chain is Photosystem II reaction center protein L from Chlorokybus atmophyticus (Soil alga).